We begin with the raw amino-acid sequence, 195 residues long: Large ribosomal subunit protein bL25 (195 aa).

It belongs to the bacterial ribosomal protein bL25 family. CTC subfamily. In terms of assembly, part of the 50S ribosomal subunit; part of the 5S rRNA/L5/L18/L25 subcomplex. Contacts the 5S rRNA. Binds to the 5S rRNA independently of L5 and L18.

In terms of biological role, this is one of the proteins that binds to the 5S RNA in the ribosome where it forms part of the central protuberance. The sequence is that of Large ribosomal subunit protein bL25 from Chlorobium chlorochromatii (strain CaD3).